Here is a 398-residue protein sequence, read N- to C-terminus: Acetate kinase (398 aa).

Mg(2+) is bound at residue Asn9. Lys16 is a binding site for ATP. Arg93 is a binding site for substrate. The active-site Proton donor/acceptor is Asp150. ATP-binding positions include 209-213 (HLGAG), 284-286 (DMR), and 329-333 (GIGEH). Glu382 is a Mg(2+) binding site.

This sequence belongs to the acetokinase family. Homodimer. Mg(2+) is required as a cofactor. The cofactor is Mn(2+).

The protein localises to the cytoplasm. The catalysed reaction is acetate + ATP = acetyl phosphate + ADP. The protein operates within metabolic intermediate biosynthesis; acetyl-CoA biosynthesis; acetyl-CoA from acetate: step 1/2. Functionally, catalyzes the formation of acetyl phosphate from acetate and ATP. Can also catalyze the reverse reaction. This Rhodopseudomonas palustris (strain TIE-1) protein is Acetate kinase.